We begin with the raw amino-acid sequence, 205 residues long: ATP synthase subunit b (205 aa).

The signal sequence occupies residues 1-27 (MKLNKKHLVAILSVLSLSIIVVPLLTS). Cys-28 carries N-palmitoyl cysteine lipidation. Cys-28 carries the S-diacylglycerol cysteine lipid modification. The helical transmembrane segment at 48–68 (VWVFIAQVIAMCVVFSLVLWL) threads the bilayer.

It belongs to the ATPase B chain family. As to quaternary structure, F-type ATPases have 2 components, F(1) - the catalytic core - and F(0) - the membrane proton channel. F(1) has five subunits: alpha(3), beta(3), gamma(1), delta(1), epsilon(1). F(0) has three main subunits: a(1), b(2) and c(10-14). The alpha and beta chains form an alternating ring which encloses part of the gamma chain. F(1) is attached to F(0) by a central stalk formed by the gamma and epsilon chains, while a peripheral stalk is formed by the delta and b chains.

Its subcellular location is the cell membrane. F(1)F(0) ATP synthase produces ATP from ADP in the presence of a proton or sodium gradient. F-type ATPases consist of two structural domains, F(1) containing the extramembraneous catalytic core and F(0) containing the membrane proton channel, linked together by a central stalk and a peripheral stalk. During catalysis, ATP synthesis in the catalytic domain of F(1) is coupled via a rotary mechanism of the central stalk subunits to proton translocation. Functionally, component of the F(0) channel, it forms part of the peripheral stalk, linking F(1) to F(0). The sequence is that of ATP synthase subunit b from Ureaplasma parvum serovar 3 (strain ATCC 27815 / 27 / NCTC 11736).